The following is a 648-amino-acid chain: Interferon-induced GTP-binding protein Mx1 (648 aa).

M1 carries the post-translational modification N-acetylmethionine. The disordered stretch occupies residues 1–26 (MVHSDLGIEELDSPESSLNGSEDMES). Residues 56-329 (DLALPAIAVI…LIMHICKTLP (274 aa)) enclose the Dynamin-type G domain. Residues 66 to 73 (GDQSSGKS) are G1 motif. 66 to 73 (GDQSSGKS) serves as a coordination point for GTP. Residues 91 to 93 (VTR) form a G2 motif region. The interval 167 to 170 (DLPG) is G3 motif. Residues 167 to 171 (DLPGI) and 236 to 239 (TKPD) contribute to the GTP site. The segment at 236–239 (TKPD) is G4 motif. Residues 268-271 (KCRG) form a G5 motif region. Positions 330 to 355 (LLENQIKETHQRITEELQKYGKDIPE) are bundle signaling element (BSE). A middle domain region spans residues 355–522 (EEESEKMFCL…HFQMEQLVYC (168 aa)). Residues 356 to 618 (EESEKMFCLI…KDQYDWLLKE (263 aa)) form a stalk region. The interval 543–546 (KNKK) is critical for lipid-binding. The GED domain occupies 560 to 648 (TDEIFQHLTA…ARQRLAKFPG (89 aa)).

Belongs to the TRAFAC class dynamin-like GTPase superfamily. Dynamin/Fzo/YdjA family. Homooligomer. Oligomerizes into multimeric filamentous or ring-like structures by virtue of its stalk domain. Oligomerization is critical for GTPase activity, protein stability, and recognition of viral target structures. Interacts with TRPC1, TRPC3, TRPC4, TRPC5, TRPC6 and TRPC7. Interacts with HSPA5. Interacts with TUBB/TUBB5. Interacts with DDX39A and DDX39B. Post-translationally, ISGylated. As to expression, ubiquitously expressed.

It localises to the cytoplasm. It is found in the endoplasmic reticulum membrane. The protein resides in the perinuclear region. The protein localises to the nucleus. Interferon-induced dynamin-like GTPase with antiviral activity against rabies virus (RABV), vesicular stomatitis virus (VSV) and murine pneumonia virus (MPV). Isoform 1 but not isoform 2 shows antiviral activity against vesicular stomatitis virus (VSV). The polypeptide is Interferon-induced GTP-binding protein Mx1 (MX1) (Bos taurus (Bovine)).